We begin with the raw amino-acid sequence, 55 residues long: Large ribosomal subunit protein bL33A (55 aa).

Belongs to the bacterial ribosomal protein bL33 family.

The protein is Large ribosomal subunit protein bL33A of Mycolicibacterium vanbaalenii (strain DSM 7251 / JCM 13017 / BCRC 16820 / KCTC 9966 / NRRL B-24157 / PYR-1) (Mycobacterium vanbaalenii).